Consider the following 1128-residue polypeptide: Inactive phospholipase C-like protein 2 (1128 aa).

The interval 1–129 (MAECGRGAAG…KKTVSFSSMP (129 aa)) is disordered. Residue Ala-2 is modified to N-acetylalanine. Ser-16 carries the post-translational modification Phosphoserine. Positions 20-30 (ALGAKGALKAG) are enriched in low complexity. Over residues 31-43 (AGEGGGGGGGGRL) the composition is skewed to gly residues. Thr-85 carries the post-translational modification Phosphothreonine. The region spanning 142–252 (NSMVEGSELK…WVTGLRYLIS (111 aa)) is the PH domain. A PI-PLC X-box domain is found at 427 to 571 (QDMKQPLSHY…LKGKILIKAK (145 aa)). Thr-585 carries the post-translational modification Phosphothreonine. Positions 619–735 (LSELVSICKS…GYVLRPAIMR (117 aa)) constitute a PI-PLC Y-box domain. Residues 735-864 (REEVSFFSAN…TGYRHVPLQS (130 aa)) form the C2 domain. The segment at 1100–1128 (KPGTENSEAQKPRRSLEAIPEKASDENGD) is disordered. Residues 1107–1128 (EAQKPRRSLEAIPEKASDENGD) show a composition bias toward basic and acidic residues. Ser-1114 is subject to Phosphoserine.

As to expression, ubiquitously expressed, with a strong expression in skeletal muscle.

The protein resides in the cytoplasm. Functionally, may play an role in the regulation of Ins(1,4,5)P3 around the endoplasmic reticulum. This is Inactive phospholipase C-like protein 2 (Plcl2) from Mus musculus (Mouse).